A 121-amino-acid chain; its full sequence is Large ribosomal subunit protein uL14 (121 aa).

It belongs to the universal ribosomal protein uL14 family. In terms of assembly, part of the 50S ribosomal subunit. Forms a cluster with proteins L3 and L19. In the 70S ribosome, L14 and L19 interact and together make contacts with the 16S rRNA in bridges B5 and B8.

In terms of biological role, binds to 23S rRNA. Forms part of two intersubunit bridges in the 70S ribosome. This Synechococcus sp. (strain CC9902) protein is Large ribosomal subunit protein uL14.